We begin with the raw amino-acid sequence, 235 residues long: Probable transcriptional regulatory protein MPN_478 (235 aa).

This sequence belongs to the TACO1 family.

It localises to the cytoplasm. This is Probable transcriptional regulatory protein MPN_478 from Mycoplasma pneumoniae (strain ATCC 29342 / M129 / Subtype 1) (Mycoplasmoides pneumoniae).